The sequence spans 231 residues: Adenylate kinase (231 aa).

Position 12–17 (12–17 (GAGKGT)) interacts with ATP. The interval 32–61 (STGDMLRAAVKAKTPLGLEVKKIMESGGLV) is NMP. AMP contacts are provided by residues T33, R38, 59–61 (GLV), 87–90 (GFPR), and Q94. The tract at residues 124 to 161 (GRLIHPASGRTYHRRYNPPKVADKDDVTGEPLIQRADD) is LID. Residues R125 and 134-135 (TY) each bind ATP. Residues R158 and R169 each contribute to the AMP site. ATP is bound at residue G205.

The protein belongs to the adenylate kinase family. Monomer.

The protein localises to the cytoplasm. The enzyme catalyses AMP + ATP = 2 ADP. The protein operates within purine metabolism; AMP biosynthesis via salvage pathway; AMP from ADP: step 1/1. Functionally, catalyzes the reversible transfer of the terminal phosphate group between ATP and AMP. Plays an important role in cellular energy homeostasis and in adenine nucleotide metabolism. The polypeptide is Adenylate kinase (Coxiella burnetii (strain CbuK_Q154) (Coxiella burnetii (strain Q154))).